The primary structure comprises 149 residues: MSRKGPFSIRNAAADTFAMVIFCFITGMFIEIFISGMTFEQSLASRMLSIPVNIAIAWPYGVFRDFMLRQGSRVSSMSFIKNVADLTAYVLFQSPVYAAILFTVGASTDQIITAVSSNAAVSCVMGVFYGYFLDACRKAFKVPGYTQRV.

4 helical membrane passes run 17-37, 43-63, 86-106, and 111-131; these read FAMVIFCFITGMFIEIFISGM, LASRMLSIPVNIAIAWPYGVF, LTAYVLFQSPVYAAILFTVGA, and IITAVSSNAAVSCVMGVFYGY.

The protein belongs to the AlaE exporter family.

It is found in the cell inner membrane. Exports L-alanine. The protein is L-alanine exporter AlaE of Aliivibrio salmonicida (strain LFI1238) (Vibrio salmonicida (strain LFI1238)).